An 878-amino-acid chain; its full sequence is Interleukin-3 receptor class 2 subunit beta (878 aa).

The signal sequence occupies residues 1–22 (MDQQMALTWGLCYMALVALCWG). Over 23 to 440 (HEVTEEEETV…SNEYTWTTDW (418 aa)) the chain is Extracellular. Cysteine 39 and cysteine 49 are oxidised to a cystine. N-linked (GlcNAc...) asparagine glycosylation is present at asparagine 62. A disulfide bridge connects residues cysteine 78 and cysteine 95. The Fibronectin type-III 1 domain maps to 139-244 (PPKDIHISPS…PEVHWDSQPG (106 aa)). Residues 223–244 (GSSLSGRPSRWSPEVHWDSQPG) form a disordered region. Disulfide bonds link cysteine 254-cysteine 264 and cysteine 293-cysteine 310. Residues 343–438 (QMEPPILNQT…EWSNEYTWTT (96 aa)) enclose the Fibronectin type-III 2 domain. Asparagine 350 is a glycosylation site (N-linked (GlcNAc...) asparagine). Residues 427-431 (WSEWS) carry the WSXWS motif motif. The chain crosses the membrane as a helical span at residues 441–462 (VMPTLWIVLILVFLIFTLLLAL). The Cytoplasmic segment spans residues 463–878 (HFGRVYGYRT…AIQFFKSLKY (416 aa)). A Box 1 motif motif is present at residues 476–484 (WKEKIPNPS). Disordered regions lie at residues 539-620 (LTIE…GGSL) and 660-709 (SSLE…MASD). Residues 554–570 (PDTTPAASSESTEQLPN) are compositionally biased toward polar residues. Over residues 671–689 (EPKENPPVELSVEKQEARD) the composition is skewed to basic and acidic residues. A phosphoserine mark is found at serine 752 and serine 754. Tyrosine 765 carries the phosphotyrosine modification. Disordered stretches follow at residues 771–810 (SVSQ…PHPE) and 829–849 (PGSL…ETED).

It belongs to the type I cytokine receptor family. Type 4 subfamily. Heterodimer of an alpha and a beta subunit.

Its subcellular location is the membrane. In terms of biological role, in mouse, there are two classes of high-affinity IL3 receptors. One contains this IL3-specific beta subunit and the other contains the beta subunit also shared by high-affinity IL5 and GM-CSF receptors. This is Interleukin-3 receptor class 2 subunit beta (Csf2rb2) from Mus musculus (Mouse).